Here is a 335-residue protein sequence, read N- to C-terminus: Beta-ketoacyl-[acyl-carrier-protein] synthase III (335 aa).

Active-site residues include Cys120 and His261. The tract at residues 262–266 is ACP-binding; that stretch reads QANER. The active site involves Asn291.

The protein belongs to the thiolase-like superfamily. FabH family. As to quaternary structure, homodimer.

It is found in the cytoplasm. The enzyme catalyses malonyl-[ACP] + acetyl-CoA + H(+) = 3-oxobutanoyl-[ACP] + CO2 + CoA. It functions in the pathway lipid metabolism; fatty acid biosynthesis. In terms of biological role, catalyzes the condensation reaction of fatty acid synthesis by the addition to an acyl acceptor of two carbons from malonyl-ACP. Catalyzes the first condensation reaction which initiates fatty acid synthesis and may therefore play a role in governing the total rate of fatty acid production. Possesses both acetoacetyl-ACP synthase and acetyl transacylase activities. Its substrate specificity determines the biosynthesis of branched-chain and/or straight-chain of fatty acids. The sequence is that of Beta-ketoacyl-[acyl-carrier-protein] synthase III from Chlamydia pneumoniae (Chlamydophila pneumoniae).